Here is a 531-residue protein sequence, read N- to C-terminus: Squalene epoxidase 1 (531 aa).

The helical transmembrane segment at 9 to 29 (ILPLLISSLLISFVAFYGFFV) threads the bilayer. FAD is bound by residues 70 to 71 (VA), 90 to 91 (ER), R98, R169, V185, D347, and M360. 2 helical membrane passes run 458–478 (LVCHFFAVAVYGVIRLLIPFP) and 483–503 (IWLGAKLISGASGIIFPIIKA).

The protein belongs to the squalene monooxygenase family. The cofactor is FAD. As to expression, expressed in seedlings, leaves, stems, inflorescences, sepals, style and siliques. Expressed in expanded cotyledons, root tips and cortical cells of the root elongation zone, but not in root hair cells. In leaves, expressed in most cells, with a very strong expression in stomata.

Its subcellular location is the membrane. It carries out the reaction squalene + reduced [NADPH--hemoprotein reductase] + O2 = (S)-2,3-epoxysqualene + oxidized [NADPH--hemoprotein reductase] + H2O + H(+). It participates in terpene metabolism; lanosterol biosynthesis; lanosterol from farnesyl diphosphate: step 2/3. Functionally, catalyzes the stereospecific oxidation of squalene to (S)-2,3-epoxysqualene, and is considered to be a rate-limiting enzyme in steroid biosynthesis. Can produce not only oxidosqualene, but also 2,3:22,23-dioxidosqualene. Main squalene epoxidase in the root. Sqe1 mutants may show defects in membrane lipid rafts, impairing the correct localization of RHD2 NADPH oxidase and the proper polarized production of ROS. The chain is Squalene epoxidase 1 (SQE1) from Arabidopsis thaliana (Mouse-ear cress).